The chain runs to 468 residues: Sorting and assembly machinery component 50 homolog (468 aa).

A disordered region spans residues 1-24; it reads MGTVHARSLDPLPMNGPDFGSHDD. Residues 44 to 124 form the POTRA domain; sequence VVVQRVHFEG…LDVTFEVTEL (81 aa).

Belongs to the SAM50/omp85 family. In terms of assembly, associates with the mitochondrial contact site and cristae organizing system (MICOS) complex (also known as MINOS or MitOS complex).

It localises to the mitochondrion outer membrane. In terms of biological role, may play a role in the maintenance of the structure of mitochondrial cristae. This Xenopus tropicalis (Western clawed frog) protein is Sorting and assembly machinery component 50 homolog (samm50).